A 589-amino-acid polypeptide reads, in one-letter code: Isocitrate dehydrogenase kinase/phosphatase (589 aa).

ATP is bound by residues Ala-317–Met-323 and Lys-338. Asp-373 is an active-site residue.

Belongs to the AceK family.

It localises to the cytoplasm. The enzyme catalyses L-seryl-[isocitrate dehydrogenase] + ATP = O-phospho-L-seryl-[isocitrate dehydrogenase] + ADP + H(+). Bifunctional enzyme which can phosphorylate or dephosphorylate isocitrate dehydrogenase (IDH) on a specific serine residue. This is a regulatory mechanism which enables bacteria to bypass the Krebs cycle via the glyoxylate shunt in response to the source of carbon. When bacteria are grown on glucose, IDH is fully active and unphosphorylated, but when grown on acetate or ethanol, the activity of IDH declines drastically concomitant with its phosphorylation. This Colwellia psychrerythraea (strain 34H / ATCC BAA-681) (Vibrio psychroerythus) protein is Isocitrate dehydrogenase kinase/phosphatase.